A 441-amino-acid chain; its full sequence is Amino-acid acetyltransferase (441 aa).

The N-acetyltransferase domain occupies 295–434; sequence EQIRRANIND…QALYNYQRRS (140 aa).

The protein belongs to the acetyltransferase family. ArgA subfamily. As to quaternary structure, homohexamer.

The protein localises to the cytoplasm. The catalysed reaction is L-glutamate + acetyl-CoA = N-acetyl-L-glutamate + CoA + H(+). The protein operates within amino-acid biosynthesis; L-arginine biosynthesis; N(2)-acetyl-L-ornithine from L-glutamate: step 1/4. This Edwardsiella ictaluri (strain 93-146) protein is Amino-acid acetyltransferase.